We begin with the raw amino-acid sequence, 222 residues long: 7-cyano-7-deazaguanine synthase (222 aa).

14-24 (FSGGQDSTTCL) contributes to the ATP binding site. Zn(2+)-binding residues include C190, C199, C202, and C205.

Belongs to the QueC family. Homodimer. Zn(2+) serves as cofactor.

It carries out the reaction 7-carboxy-7-deazaguanine + NH4(+) + ATP = 7-cyano-7-deazaguanine + ADP + phosphate + H2O + H(+). The protein operates within purine metabolism; 7-cyano-7-deazaguanine biosynthesis. In terms of biological role, catalyzes the ATP-dependent conversion of 7-carboxy-7-deazaguanine (CDG) to 7-cyano-7-deazaguanine (preQ(0)). This Staphylococcus aureus (strain Mu3 / ATCC 700698) protein is 7-cyano-7-deazaguanine synthase.